Consider the following 158-residue polypeptide: uncharacterized protein (158 aa).

This is an uncharacterized protein from Mycobacterium tuberculosis (strain CDC 1551 / Oshkosh).